A 674-amino-acid chain; its full sequence is Methionine--tRNA ligase (674 aa).

The 'HIGH' region motif lies at 11-21; it reads PYANGDLHLGH. Residues Cys142, Cys145, Cys155, and Cys158 each contribute to the Zn(2+) site. Residues 330-334 carry the 'KMSKS' region motif; sequence KMSKS. An ATP-binding site is contributed by Lys333. Positions 574–674 constitute a tRNA-binding domain; that stretch reads DFMKVDLRIA…EGAQPGMRVK (101 aa).

The protein belongs to the class-I aminoacyl-tRNA synthetase family. MetG type 1 subfamily. As to quaternary structure, homodimer. Zn(2+) is required as a cofactor.

It is found in the cytoplasm. The enzyme catalyses tRNA(Met) + L-methionine + ATP = L-methionyl-tRNA(Met) + AMP + diphosphate. Its function is as follows. Is required not only for elongation of protein synthesis but also for the initiation of all mRNA translation through initiator tRNA(fMet) aminoacylation. The polypeptide is Methionine--tRNA ligase (Francisella tularensis subsp. holarctica (strain FTNF002-00 / FTA)).